A 150-amino-acid polypeptide reads, in one-letter code: uncharacterized protein (150 aa).

5 repeat units span residues 101-105, 106-110, 111-115, 116-120, and 121-125. The tract at residues 101-125 is 5 X 5 AA tandem repeats of [FH]-H-[EK]-[IV]-N; it reads FHEVNHHEVNHHKINHHEVNHHKIN.

Belongs to the asfivirus D129L family.

This is an uncharacterized protein from African swine fever virus (isolate Tick/Malawi/Lil 20-1/1983) (ASFV).